A 270-amino-acid polypeptide reads, in one-letter code: Formamidopyrimidine-DNA glycosylase (270 aa).

Catalysis depends on P2, which acts as the Schiff-base intermediate with DNA. E3 (proton donor) is an active-site residue. K58 (proton donor; for beta-elimination activity) is an active-site residue. H91, R109, and R151 together coordinate DNA. The segment at 236–270 (QVYGKTGQQCPSCETPLKAVKLAARASVYCPECQS) adopts an FPG-type zinc-finger fold. R260 serves as the catalytic Proton donor; for delta-elimination activity.

It belongs to the FPG family. In terms of assembly, monomer. Requires Zn(2+) as cofactor.

It carries out the reaction Hydrolysis of DNA containing ring-opened 7-methylguanine residues, releasing 2,6-diamino-4-hydroxy-5-(N-methyl)formamidopyrimidine.. It catalyses the reaction 2'-deoxyribonucleotide-(2'-deoxyribose 5'-phosphate)-2'-deoxyribonucleotide-DNA = a 3'-end 2'-deoxyribonucleotide-(2,3-dehydro-2,3-deoxyribose 5'-phosphate)-DNA + a 5'-end 5'-phospho-2'-deoxyribonucleoside-DNA + H(+). Its function is as follows. Involved in base excision repair of DNA damaged by oxidation or by mutagenic agents. Acts as a DNA glycosylase that recognizes and removes damaged bases. Has a preference for oxidized purines, such as 7,8-dihydro-8-oxoguanine (8-oxoG). Has AP (apurinic/apyrimidinic) lyase activity and introduces nicks in the DNA strand. Cleaves the DNA backbone by beta-delta elimination to generate a single-strand break at the site of the removed base with both 3'- and 5'-phosphates. This is Formamidopyrimidine-DNA glycosylase from Psychromonas ingrahamii (strain DSM 17664 / CCUG 51855 / 37).